A 343-amino-acid chain; its full sequence is Anthranilate phosphoribosyltransferase (343 aa).

5-phospho-alpha-D-ribose 1-diphosphate-binding positions include G84, 87 to 88 (GD), T92, 94 to 97 (NIST), 112 to 120 (KHGNRSVSS), and S124. G84 contributes to the anthranilate binding site. S96 contacts Mg(2+). N115 contacts anthranilate. Position 170 (R170) interacts with anthranilate. Residues D229 and E230 each coordinate Mg(2+).

This sequence belongs to the anthranilate phosphoribosyltransferase family. As to quaternary structure, homodimer. The cofactor is Mg(2+).

It catalyses the reaction N-(5-phospho-beta-D-ribosyl)anthranilate + diphosphate = 5-phospho-alpha-D-ribose 1-diphosphate + anthranilate. It functions in the pathway amino-acid biosynthesis; L-tryptophan biosynthesis; L-tryptophan from chorismate: step 2/5. Functionally, catalyzes the transfer of the phosphoribosyl group of 5-phosphorylribose-1-pyrophosphate (PRPP) to anthranilate to yield N-(5'-phosphoribosyl)-anthranilate (PRA). The protein is Anthranilate phosphoribosyltransferase of Stenotrophomonas maltophilia (strain R551-3).